The primary structure comprises 783 residues: Ras and Rab interactor 1 (783 aa).

The residue at position 1 (M1) is an N-acetylmethionine. A disordered region spans residues 1–53 (MESPGESGAGSPGAPSPSSFTTGHLAREKPAQDPLYDVPNASGGQAGGPQRPG). Phosphoserine is present on residues S3 and S16. The residue at position 36 (Y36) is a Phosphotyrosine; by ABL1 and ABL2. Positions 69–163 (WLQLQANAAA…ILLLPLQLPR (95 aa)) constitute an SH2 domain. Phosphoserine occurs at positions 210, 258, 333, and 337. Disordered stretches follow at residues 250-282 (STETSSPLSPPAVPPPPVPVLPGAVPSQTERLP) and 295-342 (YRVP…HLGR). The span at 257-269 (LSPPAVPPPPVPV) shows a compositional bias: pro residues. Residues 294-727 (GYRVPAGSGP…GSGQSEARSR (434 aa)) are ras and 14-3-3 protein binding region. Residues 317 to 334 (GSPSSSEEEGVPGSRGSP) are compositionally biased toward low complexity. S351 is modified (phosphoserine; by PKD/PRKD1). Residues 456-598 (LAADGSLGRL…LSGLGQAHTL (143 aa)) enclose the VPS9 domain. Phosphoserine occurs at positions 609 and 611. The Ras-associating domain occupies 624–706 (FQHLLRVAYQ…GYLVYRRAEW (83 aa)). The residue at position 692 (R692) is an Omega-N-methylarginine. Residues 709-783 (TQGAVTEEEG…EAEGSRAAEE (75 aa)) are disordered. Over residues 762–772 (QAQEGPAQPGE) the composition is skewed to low complexity.

Belongs to the RIN (Ras interaction/interference) family. As to quaternary structure, interacts with the GTP-bound form of Ras proteins (NRAS, HRAS and KRAS). This interaction prevents the association between RAF1 and Ras. Interacts with 14-3-3 proteins YWHAB, YWHAE and YWHAZ when phosphorylated on Ser-351. Interacts with the SH3 domain of ABL1 and ABL2. Interacts with RAB5A. The interaction with Ras is probably regulated and antagonized by the interaction with 14-3-3 proteins. The interaction with 14-3-3 proteins is regulated by phosphorylation on Ser-351. In terms of processing, phosphorylated on tyrosine residues by ABL1 and ABL2. Phosphorylation at Ser-351 by PRKD1 induces interaction with 14-3-3 proteins. In terms of tissue distribution, expressed in all tissues examined with high levels in brain, placenta and pancreas.

It localises to the cytoplasm. It is found in the membrane. The protein localises to the cytoskeleton. Its function is as follows. Ras effector protein, which may serve as an inhibitory modulator of neuronal plasticity in aversive memory formation. Can affect Ras signaling at different levels. First, by competing with RAF1 protein for binding to activated Ras. Second, by enhancing signaling from ABL1 and ABL2, which regulate cytoskeletal remodeling. Third, by activating RAB5A, possibly by functioning as a guanine nucleotide exchange factor (GEF) for RAB5A, by exchanging bound GDP for free GTP, and facilitating Ras-activated receptor endocytosis. In Homo sapiens (Human), this protein is Ras and Rab interactor 1 (RIN1).